Consider the following 317-residue polypeptide: Probable porphobilinogen deaminase (317 aa).

Cys-234 bears the S-(dipyrrolylmethanemethyl)cysteine mark.

Belongs to the HMBS family. The cofactor is dipyrromethane.

It catalyses the reaction 4 porphobilinogen + H2O = hydroxymethylbilane + 4 NH4(+). The protein operates within porphyrin-containing compound metabolism; protoporphyrin-IX biosynthesis; coproporphyrinogen-III from 5-aminolevulinate: step 2/4. Functionally, tetrapolymerization of the monopyrrole PBG into the hydroxymethylbilane pre-uroporphyrinogen in several discrete steps. The polypeptide is Probable porphobilinogen deaminase (Methanosarcina acetivorans (strain ATCC 35395 / DSM 2834 / JCM 12185 / C2A)).